The sequence spans 288 residues: Acetyl-coenzyme A carboxylase carboxyl transferase subunit beta (288 aa).

Residues 34–288 enclose the CoA carboxyltransferase N-terminal domain; it reads LFAKCPACKH…HLVAFHGGGQ (255 aa). 4 residues coordinate Zn(2+): Cys-38, Cys-41, Cys-56, and Cys-59. Residues 38-59 form a C4-type zinc finger; it reads CPACKHMIYKKDLGLAKICPTC.

It belongs to the AccD/PCCB family. In terms of assembly, acetyl-CoA carboxylase is a heterohexamer composed of biotin carboxyl carrier protein (AccB), biotin carboxylase (AccC) and two subunits each of ACCase subunit alpha (AccA) and ACCase subunit beta (AccD). The cofactor is Zn(2+).

Its subcellular location is the cytoplasm. It carries out the reaction N(6)-carboxybiotinyl-L-lysyl-[protein] + acetyl-CoA = N(6)-biotinyl-L-lysyl-[protein] + malonyl-CoA. It participates in lipid metabolism; malonyl-CoA biosynthesis; malonyl-CoA from acetyl-CoA: step 1/1. In terms of biological role, component of the acetyl coenzyme A carboxylase (ACC) complex. Biotin carboxylase (BC) catalyzes the carboxylation of biotin on its carrier protein (BCCP) and then the CO(2) group is transferred by the transcarboxylase to acetyl-CoA to form malonyl-CoA. This chain is Acetyl-coenzyme A carboxylase carboxyl transferase subunit beta, found in Streptococcus dysgalactiae subsp. equisimilis (strain GGS_124).